Here is a 603-residue protein sequence, read N- to C-terminus: Elongation factor 4 (603 aa).

One can recognise a tr-type G domain in the interval 7 to 191 (DNIRNFSIVA…AIVTRLPPPK (185 aa)). Residues 19 to 24 (DHGKST) and 138 to 141 (NKVD) contribute to the GTP site.

The protein belongs to the TRAFAC class translation factor GTPase superfamily. Classic translation factor GTPase family. LepA subfamily.

It localises to the cell inner membrane. The catalysed reaction is GTP + H2O = GDP + phosphate + H(+). Required for accurate and efficient protein synthesis under certain stress conditions. May act as a fidelity factor of the translation reaction, by catalyzing a one-codon backward translocation of tRNAs on improperly translocated ribosomes. Back-translocation proceeds from a post-translocation (POST) complex to a pre-translocation (PRE) complex, thus giving elongation factor G a second chance to translocate the tRNAs correctly. Binds to ribosomes in a GTP-dependent manner. The polypeptide is Elongation factor 4 (Rhodopseudomonas palustris (strain ATCC BAA-98 / CGA009)).